Consider the following 472-residue polypeptide: Glutamate--tRNA ligase (472 aa).

Residues 10 to 20 (PSPTGYLHVGG) carry the 'HIGH' region motif. Positions 99, 101, 126, and 128 each coordinate Zn(2+). The 'KMSKS' region motif lies at 238–242 (KLSKR). Lys-241 is an ATP binding site.

The protein belongs to the class-I aminoacyl-tRNA synthetase family. Glutamate--tRNA ligase type 1 subfamily. As to quaternary structure, monomer. Zn(2+) is required as a cofactor.

It is found in the cytoplasm. The catalysed reaction is tRNA(Glu) + L-glutamate + ATP = L-glutamyl-tRNA(Glu) + AMP + diphosphate. In terms of biological role, catalyzes the attachment of glutamate to tRNA(Glu) in a two-step reaction: glutamate is first activated by ATP to form Glu-AMP and then transferred to the acceptor end of tRNA(Glu). The protein is Glutamate--tRNA ligase of Proteus mirabilis (strain HI4320).